Reading from the N-terminus, the 196-residue chain is Secreted effector protein SseB (196 aa).

It belongs to the EspA/SseB family. May form a complex with SseC and SseD. Binds to the chaperone SseA.

The protein resides in the secreted. It localises to the cell surface. Effector proteins function to alter host cell physiology and promote bacterial survival in host tissues. May act as a translocator that mediates translocation of SPI-2 T3SS effector proteins from intraphagosomal bacterial cells into the host cells. SseB is required for correct localization of SseC and SseD on the bacterial cell surface. The sequence is that of Secreted effector protein SseB (sseB) from Salmonella typhimurium (strain LT2 / SGSC1412 / ATCC 700720).